The primary structure comprises 434 residues: MFS-type transporter AFUA_1G00970 (434 aa).

Helical transmembrane passes span 21–41 (VIGG…FGVF), 60–80 (WIGS…GVLV), 87–107 (VLLI…SLCS), 112–132 (IFLA…WPPF), 145–165 (LALG…SIMI), 182–202 (VLGF…TEPP), 240–260 (VFIS…NPFF), 278–298 (YMIS…GIVA), 301–321 (VGHY…SFCW), 327–347 (LTGL…ILSL), 364–384 (AIGF…PIGG), and 393–413 (LSLS…MGYA). The tract at residues 201 to 225 (PPKQSQPQPRPALEATVEGGSASPT) is disordered.

This sequence belongs to the major facilitator superfamily. Monocarboxylate porter (TC 2.A.1.13) family.

The protein localises to the cell membrane. MFS-type transporter; part of the gene cluster that mediates the biosynthesis of fumigermin that inhibits germination of spores of the inducing S.rapamycinicus, and thus helps the fungus to defend resources in the shared habitat against a bacterial competitor. May be involved in the secretion of fumigermin. This chain is MFS-type transporter AFUA_1G00970, found in Aspergillus fumigatus (strain ATCC MYA-4609 / CBS 101355 / FGSC A1100 / Af293) (Neosartorya fumigata).